Consider the following 490-residue polypeptide: Bifunctional protein HldE (490 aa).

Residues M1–Y330 are ribokinase. N205–E208 is a binding site for ATP. D275 is a catalytic residue. The segment at F356–G490 is cytidylyltransferase.

It in the N-terminal section; belongs to the carbohydrate kinase PfkB family. In the C-terminal section; belongs to the cytidylyltransferase family. In terms of assembly, homodimer.

The catalysed reaction is D-glycero-beta-D-manno-heptose 7-phosphate + ATP = D-glycero-beta-D-manno-heptose 1,7-bisphosphate + ADP + H(+). It carries out the reaction D-glycero-beta-D-manno-heptose 1-phosphate + ATP + H(+) = ADP-D-glycero-beta-D-manno-heptose + diphosphate. Its pathway is nucleotide-sugar biosynthesis; ADP-L-glycero-beta-D-manno-heptose biosynthesis; ADP-L-glycero-beta-D-manno-heptose from D-glycero-beta-D-manno-heptose 7-phosphate: step 1/4. The protein operates within nucleotide-sugar biosynthesis; ADP-L-glycero-beta-D-manno-heptose biosynthesis; ADP-L-glycero-beta-D-manno-heptose from D-glycero-beta-D-manno-heptose 7-phosphate: step 3/4. Functionally, catalyzes the phosphorylation of D-glycero-D-manno-heptose 7-phosphate at the C-1 position to selectively form D-glycero-beta-D-manno-heptose-1,7-bisphosphate. Catalyzes the ADP transfer from ATP to D-glycero-beta-D-manno-heptose 1-phosphate, yielding ADP-D-glycero-beta-D-manno-heptose. The polypeptide is Bifunctional protein HldE (Syntrophotalea carbinolica (strain DSM 2380 / NBRC 103641 / GraBd1) (Pelobacter carbinolicus)).